Here is a 181-residue protein sequence, read N- to C-terminus: Ferritin heavy chain (181 aa).

N-acetylmethionine is present on M1. T2 is modified (N-acetylthreonine; in Ferritin heavy chain, N-terminally processed). One can recognise a Ferritin-like diiron domain in the interval 11–160; it reads QNYHQDSEAA…DHITNLRKMG (150 aa). E28, E63, H66, E108, and Q142 together coordinate Fe cation. S179 is modified (phosphoserine).

Belongs to the ferritin family. In terms of assembly, oligomer of 24 subunits. There are two types of subunits: L (light) chain and H (heavy) chain. The major chain can be light or heavy, depending on the species and tissue type. The functional molecule forms a roughly spherical shell with a diameter of 12 nm and contains a central cavity into which the insoluble mineral iron core is deposited. Interacts with NCOA4; NCOA4 promotes targeting of the iron-binding ferritin complex to autolysosomes following starvation or iron depletion.

It localises to the cytoplasm. It is found in the lysosome. The protein resides in the cytoplasmic vesicle. The protein localises to the autophagosome. It catalyses the reaction 4 Fe(2+) + O2 + 4 H(+) = 4 Fe(3+) + 2 H2O. Stores iron in a soluble, non-toxic, readily available form. Important for iron homeostasis. Has ferroxidase activity. Iron is taken up in the ferrous form and deposited as ferric hydroxides after oxidation. Also plays a role in delivery of iron to cells. Mediates iron uptake in capsule cells of the developing kidney. Delivery to lysosomes is mediated by the cargo receptor NCOA4 for autophagic degradation and release of iron. The polypeptide is Ferritin heavy chain (FTH1) (Bos taurus (Bovine)).